The following is a 426-amino-acid chain: Enolase (426 aa).

Residue Q163 participates in (2R)-2-phosphoglycerate binding. E205 serves as the catalytic Proton donor. Positions 242, 286, and 313 each coordinate Mg(2+). (2R)-2-phosphoglycerate is bound by residues K338, R367, S368, and K389. The Proton acceptor role is filled by K338.

Belongs to the enolase family. Mg(2+) serves as cofactor.

The protein localises to the cytoplasm. It localises to the secreted. It is found in the cell surface. It carries out the reaction (2R)-2-phosphoglycerate = phosphoenolpyruvate + H2O. Its pathway is carbohydrate degradation; glycolysis; pyruvate from D-glyceraldehyde 3-phosphate: step 4/5. Functionally, catalyzes the reversible conversion of 2-phosphoglycerate (2-PG) into phosphoenolpyruvate (PEP). It is essential for the degradation of carbohydrates via glycolysis. The sequence is that of Enolase from Syntrophobacter fumaroxidans (strain DSM 10017 / MPOB).